Reading from the N-terminus, the 129-residue chain is Cytochrome c-type protein SHP (129 aa).

The N-terminal stretch at 1 to 17 (MTRFLILSAVLAGPALA) is a signal peptide. Positions 60, 63, and 64 each coordinate heme c. C106 and C114 are joined by a disulfide.

Binds 1 heme c group covalently per subunit.

Functionally, high-spin cytochrome. Transiently bind oxygen during autoxidation, which occurs with a half-life of 3 minutes with a 4-fold excess of O(2). Also binds carbon monoxide, azide and cyanide. The sequence is that of Cytochrome c-type protein SHP (shp) from Cereibacter sphaeroides (strain ATCC 17023 / DSM 158 / JCM 6121 / CCUG 31486 / LMG 2827 / NBRC 12203 / NCIMB 8253 / ATH 2.4.1.) (Rhodobacter sphaeroides).